Reading from the N-terminus, the 1126-residue chain is Carbamoyl phosphate synthase large chain (1126 aa).

A carboxyphosphate synthetic domain region spans residues 1 to 402; sequence MPKRTDIKSV…SLGKAMRSID (402 aa). ATP-binding residues include R129, R169, G175, G176, E208, I210, E215, G241, V242, H243, Q285, and E299. The ATP-grasp 1 domain occupies 133-328; the sequence is KKVVEEAGAE…IAKIATKLAL (196 aa). The Mg(2+) site is built by Q285, E299, and N301. Mn(2+) is bound by residues Q285, E299, and N301. Residues 403–551 form an oligomerization domain region; it reads KRHMGFNWDG…YYYSCYADET (149 aa). A carbamoyl phosphate synthetic domain region spans residues 552–962; sequence ELRPRDREAV…AFAKSQLAAY (411 aa). The ATP-grasp 2 domain maps to 681-881; it reads GEVLKKADMN…LAKAAARIMV (201 aa). The ATP site is built by R717, K765, L767, E772, G797, V798, H799, S800, Q840, and E852. Q840, E852, and N854 together coordinate Mg(2+). Residues Q840, E852, and N854 each contribute to the Mn(2+) site. An allosteric domain region spans residues 963–1126; sequence EGGLPTSGNV…TQLFELESRD (164 aa). In terms of domain architecture, MGS-like spans 964–1126; sequence GGLPTSGNVF…TQLFELESRD (163 aa).

The protein belongs to the CarB family. Composed of two chains; the small (or glutamine) chain promotes the hydrolysis of glutamine to ammonia, which is used by the large (or ammonia) chain to synthesize carbamoyl phosphate. Tetramer of heterodimers (alpha,beta)4. Requires Mg(2+) as cofactor. Mn(2+) serves as cofactor.

The enzyme catalyses hydrogencarbonate + L-glutamine + 2 ATP + H2O = carbamoyl phosphate + L-glutamate + 2 ADP + phosphate + 2 H(+). It catalyses the reaction hydrogencarbonate + NH4(+) + 2 ATP = carbamoyl phosphate + 2 ADP + phosphate + 2 H(+). The protein operates within amino-acid biosynthesis; L-arginine biosynthesis; carbamoyl phosphate from bicarbonate: step 1/1. It participates in pyrimidine metabolism; UMP biosynthesis via de novo pathway; (S)-dihydroorotate from bicarbonate: step 1/3. In terms of biological role, large subunit of the glutamine-dependent carbamoyl phosphate synthetase (CPSase). CPSase catalyzes the formation of carbamoyl phosphate from the ammonia moiety of glutamine, carbonate, and phosphate donated by ATP, constituting the first step of 2 biosynthetic pathways, one leading to arginine and/or urea and the other to pyrimidine nucleotides. The large subunit (synthetase) binds the substrates ammonia (free or transferred from glutamine from the small subunit), hydrogencarbonate and ATP and carries out an ATP-coupled ligase reaction, activating hydrogencarbonate by forming carboxy phosphate which reacts with ammonia to form carbamoyl phosphate. The sequence is that of Carbamoyl phosphate synthase large chain from Bifidobacterium adolescentis (strain ATCC 15703 / DSM 20083 / NCTC 11814 / E194a).